The sequence spans 424 residues: CinA-like protein (424 aa).

This sequence belongs to the CinA family.

In Shewanella halifaxensis (strain HAW-EB4), this protein is CinA-like protein.